The following is a 448-amino-acid chain: Methylenetetrahydrofolate--tRNA-(uracil-5-)-methyltransferase TrmFO (448 aa).

13-18 (GAGLAG) lines the FAD pocket.

Belongs to the MnmG family. TrmFO subfamily. The cofactor is FAD.

It is found in the cytoplasm. The catalysed reaction is uridine(54) in tRNA + (6R)-5,10-methylene-5,6,7,8-tetrahydrofolate + NADH + H(+) = 5-methyluridine(54) in tRNA + (6S)-5,6,7,8-tetrahydrofolate + NAD(+). It catalyses the reaction uridine(54) in tRNA + (6R)-5,10-methylene-5,6,7,8-tetrahydrofolate + NADPH + H(+) = 5-methyluridine(54) in tRNA + (6S)-5,6,7,8-tetrahydrofolate + NADP(+). Catalyzes the folate-dependent formation of 5-methyl-uridine at position 54 (M-5-U54) in all tRNAs. This is Methylenetetrahydrofolate--tRNA-(uracil-5-)-methyltransferase TrmFO from Streptococcus pyogenes serotype M6 (strain ATCC BAA-946 / MGAS10394).